The following is a 78-amino-acid chain: Probable [Fe-S]-dependent transcriptional repressor (78 aa).

4 residues coordinate iron-sulfur cluster: C56, C61, C64, and C70.

It belongs to the FeoC family.

In terms of biological role, may function as a transcriptional regulator that controls feoABC expression. The sequence is that of Probable [Fe-S]-dependent transcriptional repressor from Citrobacter koseri (strain ATCC BAA-895 / CDC 4225-83 / SGSC4696).